The following is a 278-amino-acid chain: Formamidopyrimidine-DNA glycosylase (278 aa).

The Schiff-base intermediate with DNA role is filled by Pro2. Catalysis depends on Glu3, which acts as the Proton donor. The active-site Proton donor; for beta-elimination activity is the Lys59. DNA-binding residues include His93, Arg112, and Arg153. An FPG-type zinc finger spans residues 238 to 272 (NVYDRAGEPCPRCQSTIERIVVAQRSTYFCPTCQI). Catalysis depends on Arg262, which acts as the Proton donor; for delta-elimination activity.

This sequence belongs to the FPG family. In terms of assembly, monomer. Zn(2+) is required as a cofactor.

The enzyme catalyses Hydrolysis of DNA containing ring-opened 7-methylguanine residues, releasing 2,6-diamino-4-hydroxy-5-(N-methyl)formamidopyrimidine.. It catalyses the reaction 2'-deoxyribonucleotide-(2'-deoxyribose 5'-phosphate)-2'-deoxyribonucleotide-DNA = a 3'-end 2'-deoxyribonucleotide-(2,3-dehydro-2,3-deoxyribose 5'-phosphate)-DNA + a 5'-end 5'-phospho-2'-deoxyribonucleoside-DNA + H(+). Its function is as follows. Involved in base excision repair of DNA damaged by oxidation or by mutagenic agents. Acts as a DNA glycosylase that recognizes and removes damaged bases. Has a preference for oxidized purines, such as 7,8-dihydro-8-oxoguanine (8-oxoG). Has AP (apurinic/apyrimidinic) lyase activity and introduces nicks in the DNA strand. Cleaves the DNA backbone by beta-delta elimination to generate a single-strand break at the site of the removed base with both 3'- and 5'-phosphates. The sequence is that of Formamidopyrimidine-DNA glycosylase from Chloroflexus aurantiacus (strain ATCC 29366 / DSM 635 / J-10-fl).